Reading from the N-terminus, the 578-residue chain is 2-hydroxyacyl-CoA lyase 1 (578 aa).

Residue Ser4 is modified to Phosphoserine. Glu60 is a thiamine diphosphate binding site. N6-succinyllysine is present on residues Lys351, Lys358, and Lys365. The thiamine pyrophosphate binding stretch occupies residues 401-486 (TMDIGRTVLQ…LLVVNNNGIY (86 aa)). 2 residues coordinate Mg(2+): Asp455 and Asn482. The Microbody targeting signal motif lies at 576–578 (SNM).

It belongs to the TPP enzyme family. As to quaternary structure, homotetramer. Mg(2+) is required as a cofactor. The cofactor is thiamine diphosphate. Widely expressed.

The protein resides in the peroxisome. It carries out the reaction a 2-hydroxy-3-methyl fatty acyl-CoA = a 2-methyl-branched fatty aldehyde + formyl-CoA. The catalysed reaction is an (R)-2-hydroxy-long-chain-fatty acyl-CoA = a long-chain fatty aldehyde + formyl-CoA. The enzyme catalyses 2-hydroxy-3-methylhexadecanoyl-CoA = 2-methylpentadecanal + formyl-CoA. It catalyses the reaction 2-hydroxyoctadecanoyl-CoA = heptadecanal + formyl-CoA. It carries out the reaction 2-hydroxyphytanoyl-CoA = 2,6,10,14-tetramethylpentadecanal + formyl-CoA. The protein operates within lipid metabolism; fatty acid metabolism. Functionally, peroxisomal 2-OH acyl-CoA lyase involved in the cleavage (C1 removal) reaction in the fatty acid alpha-oxydation in a thiamine pyrophosphate (TPP)-dependent manner. Involved in the degradation of 3-methyl-branched fatty acids like phytanic acid and the shortening of 2-hydroxy long-chain fatty acids. Plays a significant role in the biosynthesis of heptadecanal in the liver. The sequence is that of 2-hydroxyacyl-CoA lyase 1 from Homo sapiens (Human).